The following is a 147-amino-acid chain: Ribonuclease P protein component 2 (147 aa).

It belongs to the eukaryotic/archaeal RNase P protein component 2 family. As to quaternary structure, consists of a catalytic RNA component and at least 4-5 protein subunits.

Its subcellular location is the cytoplasm. The enzyme catalyses Endonucleolytic cleavage of RNA, removing 5'-extranucleotides from tRNA precursor.. In terms of biological role, part of ribonuclease P, a protein complex that generates mature tRNA molecules by cleaving their 5'-ends. This chain is Ribonuclease P protein component 2, found in Methanocorpusculum labreanum (strain ATCC 43576 / DSM 4855 / Z).